The following is a 319-amino-acid chain: tRNA uridine(34) hydroxylase (319 aa).

The region spanning 124–218 (LDEDTVILDA…YGKNEETKGE (95 aa)) is the Rhodanese domain. The active-site Cysteine persulfide intermediate is the Cys-178.

It belongs to the TrhO family.

It catalyses the reaction uridine(34) in tRNA + AH2 + O2 = 5-hydroxyuridine(34) in tRNA + A + H2O. Its function is as follows. Catalyzes oxygen-dependent 5-hydroxyuridine (ho5U) modification at position 34 in tRNAs. The sequence is that of tRNA uridine(34) hydroxylase from Listeria welshimeri serovar 6b (strain ATCC 35897 / DSM 20650 / CCUG 15529 / CIP 8149 / NCTC 11857 / SLCC 5334 / V8).